Here is a 467-residue protein sequence, read N- to C-terminus: Zinc finger protein ZIC 3 (467 aa).

Residues 66 to 107 are disordered; sequence LSSGQSSAFTPQGSGYANALGHHHHHHHHHHHTSQVPSYGGA. Positions 67–80 are enriched in polar residues; it reads SSGQSSAFTPQGSG. Positions 86 to 98 are enriched in basic residues; sequence GHHHHHHHHHHHT. A Glycyl lysine isopeptide (Lys-Gly) (interchain with G-Cter in SUMO2) cross-link involves residue Lys248. Residues 251–286 form a C2H2-type 1; atypical zinc finger; sequence LSCKWIDEAQLSRPKKSCDRTFSTMHELVTHVTMEH. The C2H2-type 2; atypical zinc finger occupies 295-322; sequence HVCYWEECPREGKSFKAKYKLVNHIRVH. 2 short sequence motifs (nuclear localization signal) span residues 297-322 and 330-352; these read CYWEECPREGKSFKAKYKLVNHIRVH and CPFPGCGKIFARSENLKIHKRTH. C2H2-type zinc fingers lie at residues 328–352, 358–382, and 388–410; these read FPCPFPGCGKIFARSENLKIHKRTH, FKCEFEGCDRRFANSSDRKKHMHVH, and YICKVCDKSYTHPSSLRKHMKVH. The interval 404 to 467 is disordered; the sequence is RKHMKVHESQ…LPPNFNEWYV (64 aa). Residues 412–428 are compositionally biased toward low complexity; sequence SQGSDSSPAASSGYESS. Residues 435–455 show a composition bias toward polar residues; it reads SANSKDTTKTPSAVQTSTSHN.

It belongs to the GLI C2H2-type zinc-finger protein family. As to quaternary structure, interacts (via the C2H2-type domains 3, 4 and 5) with MDFIC (via the C2H2-type domains 3, 4 and 5); the interaction reduces its transcriptional activity. Interacts with KPNA1 and KPNA6. Interacts (via C2H2-type domains 3, 4 and 5) with GLI3; the interaction enhances its transcriptional activity.

Its subcellular location is the nucleus. The protein localises to the cytoplasm. Functionally, acts as a transcriptional activator. Required in the earliest stages in both axial midline development and left-right (LR) asymmetry specification. Binds to the minimal GLI-consensus sequence 5'-GGGTGGTC-3'. The polypeptide is Zinc finger protein ZIC 3 (ZIC3) (Homo sapiens (Human)).